The chain runs to 421 residues: ATP-dependent RNA helicase RhlB (421 aa).

The short motif at 9–37 (QKFSDFALHPKVVEALEKKGFHNCTPIQA) is the Q motif element. The Helicase ATP-binding domain maps to 40 to 219 (LPLTLAGRDV…FEQMNNAEYI (180 aa)). Position 53-60 (53-60 (AQTGTGKT)) interacts with ATP. Residues 165–168 (DEAD) carry the DEAD box motif. One can recognise a Helicase C-terminal domain in the interval 245-390 (RLLQTLIEEE…VSKYNPDALM (146 aa)). The disordered stretch occupies residues 395 to 421 (KPLRLTRARTGNGPRRTGAPRNRRRSG). Low complexity predominate over residues 402 to 414 (ARTGNGPRRTGAP).

The protein belongs to the DEAD box helicase family. RhlB subfamily. In terms of assembly, component of the RNA degradosome, which is a multiprotein complex involved in RNA processing and mRNA degradation.

It is found in the cytoplasm. The catalysed reaction is ATP + H2O = ADP + phosphate + H(+). Its function is as follows. DEAD-box RNA helicase involved in RNA degradation. Has RNA-dependent ATPase activity and unwinds double-stranded RNA. In Shigella flexneri serotype 5b (strain 8401), this protein is ATP-dependent RNA helicase RhlB.